Consider the following 593-residue polypeptide: Kelch-like protein 2 (593 aa).

The tract at residues 1-28 (METPPLPPACTKQGHQKPLDSKDDNTEK) is disordered. Residues 17-28 (KPLDSKDDNTEK) are compositionally biased toward basic and acidic residues. The region spanning 56–123 (CDVTIVAEDM…VYTAEIQVTE (68 aa)) is the BTB domain. Kelch repeat units follow at residues 308–353 (LMVV…YMAG), 354–400 (LVFA…VLNG), 402–447 (LYAV…VVGG), 449–496 (LYAV…VLNN), 497–543 (LLYA…AVNG), and 545–591 (LYVV…VIDK).

Component of the BCR(KLHL2) E3 ubiquitin ligase complex, at least composed of CUL3 and KLHL2 and RBX1. Binds actin. Interacts with KLHL12. Interacts (via N-terminus) with FYN (via SH3 domain). As to expression, ubiquitous. Detected throughout the brain.

The protein localises to the cytoplasm. The protein resides in the cytoskeleton. Its subcellular location is the cell projection. It localises to the ruffle. It is found in the lamellipodium. The protein localises to the cytosol. It functions in the pathway protein modification; protein ubiquitination. Functionally, substrate-specific adapter of a BCR (BTB-CUL3-RBX1) E3 ubiquitin ligase complex that mediates the ubiquitination of target proteins, such as NPTXR, WNK1, WNK3 and WNK4, leading most often to their proteasomal degradation. The BCR(KLHL2) complex catalyzes ubiquitination and degradation of NPTXR. Responsible for degradative ubiquitination of the WNK kinases WNK1, WNK3 and WNK4. Plays a role in the reorganization of the actin cytoskeleton. Promotes growth of cell projections in oligodendrocyte precursors. The polypeptide is Kelch-like protein 2 (Homo sapiens (Human)).